The following is a 204-amino-acid chain: Small ribosomal subunit protein uS4 (204 aa).

Residues 92–156 enclose the S4 RNA-binding domain; that stretch reads RRLDALVLRS…SKVPFQVARE (65 aa).

The protein belongs to the universal ribosomal protein uS4 family. Part of the 30S ribosomal subunit. Contacts protein S5. The interaction surface between S4 and S5 is involved in control of translational fidelity.

One of the primary rRNA binding proteins, it binds directly to 16S rRNA where it nucleates assembly of the body of the 30S subunit. Functionally, with S5 and S12 plays an important role in translational accuracy. The protein is Small ribosomal subunit protein uS4 of Streptomyces griseus subsp. griseus (strain JCM 4626 / CBS 651.72 / NBRC 13350 / KCC S-0626 / ISP 5235).